The primary structure comprises 1241 residues: DNA-directed RNA polymerase subunit beta (1241 aa).

A disordered region spans residues 1195 to 1219; that stretch reads PQDVQENVSGENVDAGYENEDVDID.

Belongs to the RNA polymerase beta chain family. In terms of assembly, the RNAP catalytic core consists of 2 alpha, 1 beta, 1 beta' and 1 omega subunit. When a sigma factor is associated with the core the holoenzyme is formed, which can initiate transcription.

The catalysed reaction is RNA(n) + a ribonucleoside 5'-triphosphate = RNA(n+1) + diphosphate. DNA-dependent RNA polymerase catalyzes the transcription of DNA into RNA using the four ribonucleoside triphosphates as substrates. The chain is DNA-directed RNA polymerase subunit beta from Clostridium acetobutylicum (strain ATCC 824 / DSM 792 / JCM 1419 / IAM 19013 / LMG 5710 / NBRC 13948 / NRRL B-527 / VKM B-1787 / 2291 / W).